We begin with the raw amino-acid sequence, 168 residues long: ATP synthase subunit b (168 aa).

A helical membrane pass occupies residues 9 to 29 (LFNLSTFVFTIINLLVLYYIL).

It belongs to the ATPase B chain family. F-type ATPases have 2 components, F(1) - the catalytic core - and F(0) - the membrane proton channel. F(1) has five subunits: alpha(3), beta(3), gamma(1), delta(1), epsilon(1). F(0) has three main subunits: a(1), b(2) and c(10-14). The alpha and beta chains form an alternating ring which encloses part of the gamma chain. F(1) is attached to F(0) by a central stalk formed by the gamma and epsilon chains, while a peripheral stalk is formed by the delta and b chains.

Its subcellular location is the cell membrane. F(1)F(0) ATP synthase produces ATP from ADP in the presence of a proton or sodium gradient. F-type ATPases consist of two structural domains, F(1) containing the extramembraneous catalytic core and F(0) containing the membrane proton channel, linked together by a central stalk and a peripheral stalk. During catalysis, ATP synthesis in the catalytic domain of F(1) is coupled via a rotary mechanism of the central stalk subunits to proton translocation. Its function is as follows. Component of the F(0) channel, it forms part of the peripheral stalk, linking F(1) to F(0). The protein is ATP synthase subunit b of Caldanaerobacter subterraneus subsp. tengcongensis (strain DSM 15242 / JCM 11007 / NBRC 100824 / MB4) (Thermoanaerobacter tengcongensis).